A 404-amino-acid chain; its full sequence is Cysteine desulfurase IscS (404 aa).

Pyridoxal 5'-phosphate-binding positions include 75 to 76 (AT), N155, Q183, and 203 to 205 (SGH). Residue K206 is modified to N6-(pyridoxal phosphate)lysine. T243 lines the pyridoxal 5'-phosphate pocket. C328 (cysteine persulfide intermediate) is an active-site residue. [2Fe-2S] cluster is bound at residue C328.

This sequence belongs to the class-V pyridoxal-phosphate-dependent aminotransferase family. NifS/IscS subfamily. As to quaternary structure, homodimer. Forms a heterotetramer with IscU, interacts with other sulfur acceptors. Requires pyridoxal 5'-phosphate as cofactor.

It is found in the cytoplasm. It carries out the reaction (sulfur carrier)-H + L-cysteine = (sulfur carrier)-SH + L-alanine. It participates in cofactor biosynthesis; iron-sulfur cluster biosynthesis. In terms of biological role, master enzyme that delivers sulfur to a number of partners involved in Fe-S cluster assembly, tRNA modification or cofactor biosynthesis. Catalyzes the removal of elemental sulfur atoms from cysteine to produce alanine. Functions as a sulfur delivery protein for Fe-S cluster synthesis onto IscU, an Fe-S scaffold assembly protein, as well as other S acceptor proteins. This Mannheimia succiniciproducens (strain KCTC 0769BP / MBEL55E) protein is Cysteine desulfurase IscS.